The primary structure comprises 247 residues: Flagellin B1 (247 aa).

A propeptide spanning residues 1–20 is cleaved from the precursor; that stretch reads MNKLLRKVRKAFSLKADNKA.

Belongs to the archaeal flagellin family. Post-translationally, glycosylated.

It localises to the archaeal flagellum. Its function is as follows. Flagellin is the subunit protein which polymerizes to form the filaments of archaeal flagella. In Thermoplasma volcanium (strain ATCC 51530 / DSM 4299 / JCM 9571 / NBRC 15438 / GSS1), this protein is Flagellin B1.